The following is a 138-amino-acid chain: MAKPIPKVGSRRNGRSSARKSARRIPKGVIHVQASFNNTIVTVTDVRGRVISWSSAGTCGFKGTRRGTPFAAQTAAGNAIRAVVDQGMQRAEVMIKGPGLGRDAALRAIRRSGILLSFVRDVTPMPHNGCRPPKKRRV.

The segment at 1–24 (MAKPIPKVGSRRNGRSSARKSARR) is disordered. The segment covering 9-24 (GSRRNGRSSARKSARR) has biased composition (basic residues).

It belongs to the universal ribosomal protein uS11 family. In terms of assembly, part of the 30S ribosomal subunit.

It is found in the plastid. It localises to the chloroplast. In Gossypium hirsutum (Upland cotton), this protein is Small ribosomal subunit protein uS11c.